Reading from the N-terminus, the 795-residue chain is Glycerol-3-phosphate acyltransferase 2, mitochondrial (795 aa).

A disordered region spans residues 1-21; the sequence is MATMLEGRCQTQPRSSPSGRE. Residues 1 to 305 are Cytoplasmic-facing; sequence MATMLEGRCQ…LGPRLSALGQ (305 aa). Polar residues predominate over residues 9-18; sequence CQTQPRSSPS. The acyltransferase stretch occupies residues 180-331; sequence QLHKGQMKMV…DALLVPVAVT (152 aa). An HXXXXD motif motif is present at residues 205–210; that stretch reads HKTLLD. A helical membrane pass occupies residues 306–332; the sequence is AWVGFVVQAVQVGIVPDALLVPVAVTY. The Mitochondrial intermembrane segment spans residues 333-449; sequence DLVPDAPCDI…QLLVRRLSCH (117 aa). The helical transmembrane segment at 450-472 threads the bilayer; that stretch reads VLSASVGSSAVMSTAIMATLLLF. Residues 473–795 are Cytoplasmic-facing; it reads KHQKLLGEFS…EQFIRQFICS (323 aa). At serine 656 the chain carries Phosphoserine. A Phosphothreonine modification is found at threonine 660. 2 positions are modified to phosphoserine: serine 662 and serine 664.

Belongs to the GPAT/DAPAT family. As to quaternary structure, interacts with PIWIL2.

Its subcellular location is the mitochondrion outer membrane. The enzyme catalyses sn-glycerol 3-phosphate + an acyl-CoA = a 1-acyl-sn-glycero-3-phosphate + CoA. It catalyses the reaction a 1-acyl-sn-glycero-3-phosphate + an acyl-CoA = a 1,2-diacyl-sn-glycero-3-phosphate + CoA. The catalysed reaction is 1-(9Z-octadecenoyl)-sn-glycero-3-phosphate + (9Z)-octadecenoyl-CoA = 1,2-di-(9Z-octadecenoyl)-sn-glycero-3-phosphate + CoA. It carries out the reaction 1-(9Z-octadecenoyl)-sn-glycero-3-phosphate + (5Z,8Z,11Z,14Z)-eicosatetraenoyl-CoA = 1-(9Z)-octadecenoyl-2-(5Z,8Z,11Z,14Z)-eicosatetraenoyl-sn-glycero-3-phosphate + CoA. The enzyme catalyses (5Z,8Z,11Z,14Z)-eicosatetraenoyl-CoA + sn-glycerol 3-phosphate = 1-(5Z,8Z,11Z,14Z-eicosatetraenoyl)-sn-glycero-3-phosphate + CoA. The protein operates within phospholipid metabolism; CDP-diacylglycerol biosynthesis; CDP-diacylglycerol from sn-glycerol 3-phosphate: step 1/3. Inhibited by N-ethylmaleimide (NEM). In terms of biological role, transfers an acyl-group from acyl-ACP to the sn-1 position of glycerol-3-phosphate producing a lysophosphatidic acid (LPA), an essential step for the triacylglycerol (TAG) and glycerophospholipids. In vitro also transfers an acyl-group from acyl-ACP to the LPA producing a phosphatidic acid (PA). Prefers arachidonoyl-CoA as the acyl donor. Required for primary processing step during piRNA biosynthesis. Molecular mechanisms by which it promotes piRNA biosynthesis are unclear and do not involve its acyltransferase activity. The polypeptide is Glycerol-3-phosphate acyltransferase 2, mitochondrial (Homo sapiens (Human)).